Reading from the N-terminus, the 235-residue chain is MYEAVYAHPDGDSTVARHALTAADSEYDGIVVRNHGDEQADYDADAISDAYGVDVAAGIEVRADDPSRASGFVGNYRSDRTVVVVHGGDRRINRFAVEQPTVDVLAHPMRDDGDFNHVLANAAADNGVRVEFDFGPVLRASGGSRVRAIKELRKLRELVENAGAPFVVSASPSTHLQIRAPRDIIAVGETIGFDADTVREGLTEWGQIVERNRERQSGAVIEPGVRLEDDADDAE.

It belongs to the eukaryotic/archaeal RNase P protein component 3 family. In terms of assembly, consists of a catalytic RNA component and at least 4-5 protein subunits.

It localises to the cytoplasm. It catalyses the reaction Endonucleolytic cleavage of RNA, removing 5'-extranucleotides from tRNA precursor.. In terms of biological role, part of ribonuclease P, a protein complex that generates mature tRNA molecules by cleaving their 5'-ends. In Haloarcula marismortui (strain ATCC 43049 / DSM 3752 / JCM 8966 / VKM B-1809) (Halobacterium marismortui), this protein is Ribonuclease P protein component 3.